Consider the following 217-residue polypeptide: Uridylate kinase (217 aa).

An ATP-binding site is contributed by 5–9 (KLTGR). A UMP-binding site is contributed by Gly-37. Gly-38 and Arg-42 together coordinate ATP. UMP-binding positions include Asp-59 and 107–113 (FQPGQST). The ATP site is built by Asn-134, Tyr-139, and Asp-142.

This sequence belongs to the UMP kinase family. In terms of assembly, homohexamer.

The protein resides in the cytoplasm. It catalyses the reaction UMP + ATP = UDP + ADP. Its pathway is pyrimidine metabolism; CTP biosynthesis via de novo pathway; UDP from UMP (UMPK route): step 1/1. Its activity is regulated as follows. Inhibited by UTP. In terms of biological role, catalyzes the reversible phosphorylation of UMP to UDP. This chain is Uridylate kinase, found in Pyrobaculum calidifontis (strain DSM 21063 / JCM 11548 / VA1).